A 577-amino-acid polypeptide reads, in one-letter code: Moesin (577 aa).

In terms of domain architecture, FERM spans 2 to 295 (PKTISVRVTT…GNHELYMRRR (294 aa)). Phosphoserine is present on Ser74. An N6-acetyllysine modification is found at Lys79. Lys83 carries the post-translational modification N6-succinyllysine. The short motif at 115-120 (IYCPPE) is the [IL]-x-C-x-x-[DE] motif element. Tyr116 is subject to Phosphotyrosine. The residue at position 117 (Cys117) is an S-nitrosocysteine. N6-acetyllysine is present on residues Lys139 and Lys165. Disordered stretches follow at residues 323–342 (LENE…KIER), 375–409 (LEQE…ASRD), and 466–518 (AMST…NERV). Over residues 375 to 401 (LEQERKRAQSEAEKLAKERQEAEEAKE) the composition is skewed to basic and acidic residues. Ser407 carries the post-translational modification Phosphoserine. Over residues 476 to 487 (AENEQDEQDENG) the composition is skewed to acidic residues. A compositionally biased stretch (basic and acidic residues) spans 492–518 (ADLRADAMAKDRSEEERTTEAEKNERV). Ser527 carries the post-translational modification Phosphoserine. Residue Thr558 is modified to Phosphothreonine; by ROCK2 and STK10.

In terms of assembly, in resting T-cells, part of a PAG1-NHERF1-MSN complex which is disrupted upon TCR activation. Interacts with NHERF1. Interacts with PPP1R16B. Interacts with SELPLG and SYK; these interactions mediate the activation of SYK by SELPLG. Interacts with PDPN (via cytoplasmic domain); this interaction activates RHOA and promotes epithelial-mesenchymal transition. Interacts with SPN/CD43 cytoplasmic tail. Interacts with CD44. Interacts with ICAM2. Interacts with ICAM3 (via C-terminus). Interacts with PDZD8. Interacts with F-actin. Interacts with CD46. Interacts with PTPN6. (Microbial infection) Interacts with HIV-1 envelope protein gp120. Phosphorylation on Thr-558 is crucial for the formation of microvilli-like structures. Phosphorylation by ROCK2 suppresses the head-to-tail association of the N-terminal and C-terminal halves resulting in an opened conformation which is capable of actin and membrane-binding. Phosphorylation on Thr-558 by STK10 negatively regulates lymphocyte migration and polarization. In terms of processing, S-nitrosylation of Cys-117 is induced by interferon-gamma and oxidatively-modified low-densitity lipoprotein (LDL(ox)) implicating the iNOS-S100A8/9 transnitrosylase complex. In all tissues and cultured cells studied.

The protein localises to the cell membrane. The protein resides in the cytoplasm. It is found in the cytoskeleton. It localises to the apical cell membrane. Its subcellular location is the cell projection. The protein localises to the microvillus membrane. The protein resides in the microvillus. A head-to-tail association, of the N-terminal and C-terminal halves results in a closed conformation (inactive form) which is incapable of actin or membrane-binding. In terms of biological role, ezrin-radixin-moesin (ERM) family protein that connects the actin cytoskeleton to the plasma membrane and thereby regulates the structure and function of specific domains of the cell cortex. Tethers actin filaments by oscillating between a resting and an activated state providing transient interactions between moesin and the actin cytoskeleton. Once phosphorylated on its C-terminal threonine, moesin is activated leading to interaction with F-actin and cytoskeletal rearrangement. These rearrangements regulate many cellular processes, including cell shape determination, membrane transport, and signal transduction. The role of moesin is particularly important in immunity acting on both T and B-cells homeostasis and self-tolerance, regulating lymphocyte egress from lymphoid organs. Modulates phagolysosomal biogenesis in macrophages. Also participates in immunologic synapse formation. The chain is Moesin from Homo sapiens (Human).